The sequence spans 346 residues: Melanoma-associated antigen B4 (346 aa).

The span at 1 to 18 shows a compositional bias: basic residues; sequence MPRGQKSKLRAREKRQRT. The tract at residues 1-107 is disordered; it reads MPRGQKSKLR…STSTERSLKD (107 aa). Residues 45-54 show a composition bias toward polar residues; it reads VLRDTASSSL. Positions 92 to 101 are enriched in low complexity; it reads ASSSQASTST. The MAGE domain occupies 109-307; the sequence is LTRKTKMLVQ…NNFPLLYEEA (199 aa). The segment at 311 to 346 is disordered; that stretch reads EEERAGARPRVAARRGTTAMTSAYSRATSSSSSQPM. Positions 318-346 are enriched in low complexity; it reads RPRVAARRGTTAMTSAYSRATSSSSSQPM.

In terms of tissue distribution, expressed in testis.

Its subcellular location is the cytoplasm. The protein is Melanoma-associated antigen B4 (MAGEB4) of Homo sapiens (Human).